Here is a 162-residue protein sequence, read N- to C-terminus: Caveolin-2 (162 aa).

The Cytoplasmic segment spans residues 1–86 (MGLETEKADV…FEISKYIIYK (86 aa)). Tyr-19 carries the post-translational modification Phosphotyrosine; by SRC. Ser-20 and Ser-23 each carry phosphoserine. A Phosphotyrosine; by SRC modification is found at Tyr-27. The segment at residues 87–107 (FLTVFLAIPLAFAAGILFATL) is an intramembrane region (helical). Over 108–162 (SCLHIWITMPFVKTCLMVLPSVQTIWKSVTDVAIAPLCTSVGRSFSSVSLQLSHD) the chain is Cytoplasmic.

It belongs to the caveolin family. As to quaternary structure, monomer or homodimer. Interacts with CAV1; the interaction forms a stable heterooligomeric complex that is required for targeting to lipid rafts and for caveolae formation. Tyrosine phosphorylated forms do not form heterooligomers with the Tyr-19-phosphorylated form existing as a monomer or dimer, and the Tyr-27-form as a monomer only. Interacts (tyrosine phosphorylated form) with the SH2 domain-containing proteins, RASA1, NCK1 and SRC. Interacts (tyrosine phosphorylated form) with INSR, the interaction (Tyr-27-phosphorylated form) is increased on insulin stimulation. Interacts (Tyr-19 phosphorylated form) with MAPK1 (phosphorylated form); the interaction, promoted by insulin, leads to nuclear location and MAPK1 activation. Interacts with STAT3; the interaction is increased on insulin-induced tyrosine phosphorylation leading to STAT activation. Phosphorylated on serine and tyrosine residues. CAV1 promotes phosphorylation on Ser-23 which then targets the complex to the plasma membrane, lipid rafts and caveolae. Phosphorylation on both Tyr-19 and Tyr-27 is required for insulin-induced 'Ser-727' phosphorylation of STAT3 and its activation. Phosphorylation on Tyr-19 is required for insulin-induced phosphorylation of MAPK1 and DNA binding of STAT3. Tyrosine phosphorylation is induced by both EGF and insulin.

It is found in the nucleus. The protein localises to the cytoplasm. Its subcellular location is the golgi apparatus membrane. The protein resides in the cell membrane. It localises to the membrane. It is found in the caveola. In terms of biological role, may act as a scaffolding protein within caveolar membranes. Interacts directly with G-protein alpha subunits and can functionally regulate their activity. Acts as an accessory protein in conjunction with CAV1 in targeting to lipid rafts and driving caveolae formation. Positive regulator of cellular mitogenesis of the MAPK signaling pathway. Required for the insulin-stimulated nuclear translocation and activation of MAPK1 and STAT3, and the subsequent regulation of cell cycle progression. This Dasypus novemcinctus (Nine-banded armadillo) protein is Caveolin-2 (CAV2).